Consider the following 440-residue polypeptide: MSEFSQTVPELVAWARKNDFSISLPVDRLSFLLAVATLNGERLDGEMSEGELVDAFRHVSDAFEQTSETIGVRANNAINDMVRQRLLNRFTSEQAEGNAIYRLTPLGIGITDYYIRQREFSTLRLSMQLSIVAGELKRAADAAEEGGDEFHWHRNVYAPLKYSVAEIFDSIDLTQRLMDEQQQQVKDDIAQLLNKDWRAAISSCELLLSETSGTLRELQDTLEAAGDKLQANLLRIQDATMTHDDLHFVDRLVFDLQSKLDRIISWGQQSIDLWIGYDRHVHKFIRTAIDMDKNRVFAQRLRQSVQTYFDEPWALTYANADRLLDMRDEEMALRDEEVTGELPEDLEYEEFNKIREQLAAIIEEQLAVYKTRQVPLDLGLVVREYLSQYPRARHFDVARIVIDQAVRLGVAQADFTGLPAKWQPINDYGAKVQAHVIDKY.

Residues 208 to 236 are leucine-zipper; it reads LSETSGTLRELQDTLEAAGDKLQANLLRI.

It belongs to the MukF family. As to quaternary structure, interacts, and probably forms a ternary complex, with MukE and MukB via its C-terminal region. The complex formation is stimulated by calcium or magnesium. It is required for an interaction between MukE and MukB.

The protein localises to the cytoplasm. The protein resides in the nucleoid. Its function is as follows. Involved in chromosome condensation, segregation and cell cycle progression. May participate in facilitating chromosome segregation by condensation DNA from both sides of a centrally located replisome during cell division. Not required for mini-F plasmid partitioning. Probably acts via its interaction with MukB and MukE. Overexpression results in anucleate cells. It has a calcium binding activity. The protein is Chromosome partition protein MukF of Escherichia coli O9:H4 (strain HS).